We begin with the raw amino-acid sequence, 271 residues long: MPELPEVETTLRGLLPYLTNQLIYSLTLRRRTLRWDIPSHIESRLPGHRITTVCRRAKYLLIDTNAGGSLIIHLGMSGTLRLLAPETPLRPHDHVDIMLNNRRVLRFNDPRRFGCLLWQEDGQIHPLLQRLGCEPLSDSFNGDYLYQCSRARNVSVKTFLMDQRIVVGVGNIYAAESLFRAGISPLCEADKISLQRYRRLAEVVKDILLYAINRGGTTLRDFLSPDGRPGYFKQELFVYGRQQQPCKQCGSLLRQTTIRQRTTVWCGHCQG.

Proline 2 (schiff-base intermediate with DNA) is an active-site residue. Glutamate 3 (proton donor) is an active-site residue. Lysine 58 functions as the Proton donor; for beta-elimination activity in the catalytic mechanism. Residues histidine 92, arginine 111, and arginine 152 each contribute to the DNA site. An FPG-type zinc finger spans residues 237 to 271 (FVYGRQQQPCKQCGSLLRQTTIRQRTTVWCGHCQG). Arginine 261 serves as the catalytic Proton donor; for delta-elimination activity.

Belongs to the FPG family. As to quaternary structure, monomer. The cofactor is Zn(2+).

The catalysed reaction is Hydrolysis of DNA containing ring-opened 7-methylguanine residues, releasing 2,6-diamino-4-hydroxy-5-(N-methyl)formamidopyrimidine.. It carries out the reaction 2'-deoxyribonucleotide-(2'-deoxyribose 5'-phosphate)-2'-deoxyribonucleotide-DNA = a 3'-end 2'-deoxyribonucleotide-(2,3-dehydro-2,3-deoxyribose 5'-phosphate)-DNA + a 5'-end 5'-phospho-2'-deoxyribonucleoside-DNA + H(+). Involved in base excision repair of DNA damaged by oxidation or by mutagenic agents. Acts as a DNA glycosylase that recognizes and removes damaged bases. Has a preference for oxidized purines, such as 7,8-dihydro-8-oxoguanine (8-oxoG). Has AP (apurinic/apyrimidinic) lyase activity and introduces nicks in the DNA strand. Cleaves the DNA backbone by beta-delta elimination to generate a single-strand break at the site of the removed base with both 3'- and 5'-phosphates. The protein is Formamidopyrimidine-DNA glycosylase (mutM1) of Xylella fastidiosa (strain 9a5c).